The following is a 431-amino-acid chain: Serine--tRNA ligase (431 aa).

T238–E240 is an L-serine binding site. R269 to E271 lines the ATP pocket. E292 is a binding site for L-serine. Residue E356–S359 participates in ATP binding. S392 contacts L-serine.

Belongs to the class-II aminoacyl-tRNA synthetase family. Type-1 seryl-tRNA synthetase subfamily. In terms of assembly, homodimer. The tRNA molecule binds across the dimer.

The protein resides in the cytoplasm. It carries out the reaction tRNA(Ser) + L-serine + ATP = L-seryl-tRNA(Ser) + AMP + diphosphate + H(+). It catalyses the reaction tRNA(Sec) + L-serine + ATP = L-seryl-tRNA(Sec) + AMP + diphosphate + H(+). The protein operates within aminoacyl-tRNA biosynthesis; selenocysteinyl-tRNA(Sec) biosynthesis; L-seryl-tRNA(Sec) from L-serine and tRNA(Sec): step 1/1. Functionally, catalyzes the attachment of serine to tRNA(Ser). Is also able to aminoacylate tRNA(Sec) with serine, to form the misacylated tRNA L-seryl-tRNA(Sec), which will be further converted into selenocysteinyl-tRNA(Sec). The chain is Serine--tRNA ligase from Pectobacterium atrosepticum (strain SCRI 1043 / ATCC BAA-672) (Erwinia carotovora subsp. atroseptica).